Reading from the N-terminus, the 114-residue chain is DNA-binding protein Mbur_0117 (114 aa).

A disordered region spans residues 14–37 (ELQQQQSSPQNDAQAAYQQEQAQA). Residues 16-35 (QQQQSSPQNDAQAAYQQEQA) are compositionally biased toward low complexity.

It belongs to the PDCD5 family.

In Methanococcoides burtonii (strain DSM 6242 / NBRC 107633 / OCM 468 / ACE-M), this protein is DNA-binding protein Mbur_0117.